The following is a 263-amino-acid chain: 3-methyl-2-oxobutanoate hydroxymethyltransferase (263 aa).

Residues Asp45 and Asp84 each contribute to the Mg(2+) site. 3-methyl-2-oxobutanoate contacts are provided by residues 45–46, Asp84, and Lys112; that span reads DS. Residue Glu114 participates in Mg(2+) binding. Residue Glu181 is the Proton acceptor of the active site.

It belongs to the PanB family. In terms of assembly, homodecamer; pentamer of dimers. Mg(2+) serves as cofactor.

It localises to the cytoplasm. The enzyme catalyses 3-methyl-2-oxobutanoate + (6R)-5,10-methylene-5,6,7,8-tetrahydrofolate + H2O = 2-dehydropantoate + (6S)-5,6,7,8-tetrahydrofolate. It functions in the pathway cofactor biosynthesis; (R)-pantothenate biosynthesis; (R)-pantoate from 3-methyl-2-oxobutanoate: step 1/2. Its function is as follows. Catalyzes the reversible reaction in which hydroxymethyl group from 5,10-methylenetetrahydrofolate is transferred onto alpha-ketoisovalerate to form ketopantoate. In Photorhabdus laumondii subsp. laumondii (strain DSM 15139 / CIP 105565 / TT01) (Photorhabdus luminescens subsp. laumondii), this protein is 3-methyl-2-oxobutanoate hydroxymethyltransferase.